Here is a 250-residue protein sequence, read N- to C-terminus: NAD-dependent protein deacetylase 2 (250 aa).

The 247-residue stretch at 4–250 (MDSKNLFKKA…LRNIWNLIKS (247 aa)) folds into the Deacetylase sirtuin-type domain. Residues alanine 29, threonine 33, phenylalanine 40, arginine 41, glutamine 107, isoleucine 109, aspartate 110, and histidine 125 each contribute to the NAD(+) site. Phenylalanine 40 contributes to the nicotinamide binding site. The nicotinamide site is built by isoleucine 109 and aspartate 110. Catalysis depends on histidine 125, which acts as the Proton acceptor. The Zn(2+) site is built by cysteine 133, cysteine 136, cysteine 158, and cysteine 161. Residues serine 198, serine 199, and asparagine 219 each coordinate NAD(+).

This sequence belongs to the sirtuin family. Class U subfamily. Zn(2+) serves as cofactor.

Its subcellular location is the cytoplasm. The catalysed reaction is N(6)-acetyl-L-lysyl-[protein] + NAD(+) + H2O = 2''-O-acetyl-ADP-D-ribose + nicotinamide + L-lysyl-[protein]. NAD-dependent protein deacetylase which modulates the activities of several enzymes which are inactive in their acetylated form. This chain is NAD-dependent protein deacetylase 2, found in Caldanaerobacter subterraneus subsp. tengcongensis (strain DSM 15242 / JCM 11007 / NBRC 100824 / MB4) (Thermoanaerobacter tengcongensis).